Here is a 691-residue protein sequence, read N- to C-terminus: DNA ligase (691 aa).

Residues 41 to 45, 90 to 91, and Glu130 contribute to the NAD(+) site; these read DAEYD and SL. Lys132 acts as the N6-AMP-lysine intermediate in catalysis. NAD(+) contacts are provided by Arg153, Glu190, Lys307, and Lys331. Zn(2+) is bound by residues Cys425, Cys428, Cys443, and Cys449. Positions 610-691 constitute a BRCT domain; it reads APQGVLAGKT…MHTLLEGHAR (82 aa).

This sequence belongs to the NAD-dependent DNA ligase family. LigA subfamily. It depends on Mg(2+) as a cofactor. The cofactor is Mn(2+).

It catalyses the reaction NAD(+) + (deoxyribonucleotide)n-3'-hydroxyl + 5'-phospho-(deoxyribonucleotide)m = (deoxyribonucleotide)n+m + AMP + beta-nicotinamide D-nucleotide.. Functionally, DNA ligase that catalyzes the formation of phosphodiester linkages between 5'-phosphoryl and 3'-hydroxyl groups in double-stranded DNA using NAD as a coenzyme and as the energy source for the reaction. It is essential for DNA replication and repair of damaged DNA. This is DNA ligase from Burkholderia mallei (strain NCTC 10247).